The sequence spans 316 residues: Conjugated bile acid hydrolase (316 aa).

Cys-2 (nucleophile) is an active-site residue. Deoxycholate is bound by residues Cys-2 and Arg-18. Asn-81 is a taurine binding site.

The protein belongs to the peptidase C59 family.

The enzyme catalyses cholate + taurine = taurocholate + H2O. It catalyses the reaction taurochenodeoxycholate + H2O = chenodeoxycholate + taurine. It carries out the reaction taurodeoxycholate + H2O = deoxycholate + taurine. The catalysed reaction is glycocholate + H2O = cholate + glycine. The enzyme catalyses glycodeoxycholate + H2O = deoxycholate + glycine. Its pathway is lipid metabolism; bile acid biosynthesis. Bile salt hydrolase that catalyzes the deconjugation of glycine- and taurine-linked bile salts, which occurs naturally in the intestines of humans, releasing amino acid residues and deconjugated bile salts (bile acids). Can hydrolyze the amide bond in the bile salts taurocholate (TCA), taurodeoxycholate (TDCA), taurochenodeoxycholate (TCDCA), glycocholate (GCA) and glycodeoxycholate (GDCA). Shows highest activity toward the taurine-conjugated bile salts TCA and TCDCA. The activity toward the other three substrates (TDCA, GCA and GDCA) is relatively low. This enzyme likely contributes to bile salt resistance of the strain and may be associated with survival capability of strain JCM1131 within the human intestine by bile detoxification. This Lactobacillus gasseri (strain ATCC 33323 / DSM 20243 / BCRC 14619 / CIP 102991 / JCM 1131 / KCTC 3163 / NCIMB 11718 / NCTC 13722 / AM63) protein is Conjugated bile acid hydrolase.